The chain runs to 326 residues: Prenyl transferase nodC (326 aa).

A helical transmembrane segment spans residues 8-28 (LAAVLFSALFSLGVILVHLPW). Isopentenyl diphosphate is bound at residue histidine 95. Mg(2+) contacts are provided by aspartate 102 and aspartate 106. Dimethylallyl diphosphate is bound at residue arginine 111. Residue asparagine 139 is glycosylated (N-linked (GlcNAc...) asparagine). Lysine 195 is a dimethylallyl diphosphate binding site. Asparagine 210 is a glycosylation site (N-linked (GlcNAc...) asparagine).

Belongs to the FPP/GGPP synthase family.

Its subcellular location is the membrane. The protein operates within secondary metabolite biosynthesis. Its function is as follows. Cytochrome P450 monooxygenase; part of the gene cluster that mediates the biosynthesis of the indole diterpenes nodulisporic acids (NA). Nodulisporic acid A (NAA) and its chemically modified derivatives are of particular significance because of their highly potent insecticidal activity against blood-feeding arthropods and lack of observable adverse effects on mammals, in particular the tremogenicity associated with the paspaline-derived IDTs is not observed. The geranylgeranyl diphosphate (GGPP) synthase ggs1, localized outside of the cluster, is proposed to catalyze the first step in nodulisporic acid biosynthesis via conversion of farnesyl pyrophosphate and isopentyl pyrophosphate into geranylgeranyl pyrophosphate (GGPP). Condensation of indole-3-glycerol phosphate with GGPP by the prenyl transferase nodC then forms 3-geranylgeranylindole (3-GGI). Epoxidation by the FAD-dependent monooxygenase nodM leads to a single-epoxidized-GGI that is substrate of the terpene cyclase nodB for cyclization to yield emindole SB. The terminal methyl carbon, C28, of emindole SB is then oxidized by the cytochrome P450 monooxygenase nodW to produce nodulisporic acid F (NAF), the pentacyclic core of NAA. NAF is converted to nodulisporic acid E (NAE) via prenylation. This step is probably performed by one of the indole diterpene prenyltransferases nodD1 or nodD2. Several oxidation steps performed by the FAD-linked oxidoreductase nodO and one of the cytochrome P450 monooxygenase nodR, nodX or nodZ further convert NAE to nodulisporic acid D (NAD). NAD is substrate of cytochrome P450 monooxygenase nodJ to produce the precursor of nodulisporic acid C (NAC), converted to NAC by one of the indole diterpene prenyltransferases nodD1 or nodD2. The FAD-dependent monooxygenase nodY2 then oxidizes NAC to nodulisporic acid B (NAB). Finally NAB is converted to NAA by one of the cytochrome P450 monooxygenases nodR, nodX or nodZ. The sequence is that of Prenyl transferase nodC from Hypoxylon pulicicidum.